The primary structure comprises 248 residues: Leucyl/phenylalanyl-tRNA--protein transferase (248 aa).

It belongs to the L/F-transferase family.

The protein resides in the cytoplasm. The enzyme catalyses N-terminal L-lysyl-[protein] + L-leucyl-tRNA(Leu) = N-terminal L-leucyl-L-lysyl-[protein] + tRNA(Leu) + H(+). The catalysed reaction is N-terminal L-arginyl-[protein] + L-leucyl-tRNA(Leu) = N-terminal L-leucyl-L-arginyl-[protein] + tRNA(Leu) + H(+). It catalyses the reaction L-phenylalanyl-tRNA(Phe) + an N-terminal L-alpha-aminoacyl-[protein] = an N-terminal L-phenylalanyl-L-alpha-aminoacyl-[protein] + tRNA(Phe). In terms of biological role, functions in the N-end rule pathway of protein degradation where it conjugates Leu, Phe and, less efficiently, Met from aminoacyl-tRNAs to the N-termini of proteins containing an N-terminal arginine or lysine. The sequence is that of Leucyl/phenylalanyl-tRNA--protein transferase from Ralstonia pickettii (strain 12J).